The primary structure comprises 184 residues: Large ribosomal subunit protein uL5 (184 aa).

Belongs to the universal ribosomal protein uL5 family. Part of the 50S ribosomal subunit; part of the 5S rRNA/L5/L18/L25 subcomplex. Contacts the 5S rRNA and the P site tRNA. Forms a bridge to the 30S subunit in the 70S ribosome.

This is one of the proteins that bind and probably mediate the attachment of the 5S RNA into the large ribosomal subunit, where it forms part of the central protuberance. In the 70S ribosome it contacts protein S13 of the 30S subunit (bridge B1b), connecting the 2 subunits; this bridge is implicated in subunit movement. Contacts the P site tRNA; the 5S rRNA and some of its associated proteins might help stabilize positioning of ribosome-bound tRNAs. In Syntrophotalea carbinolica (strain DSM 2380 / NBRC 103641 / GraBd1) (Pelobacter carbinolicus), this protein is Large ribosomal subunit protein uL5.